Reading from the N-terminus, the 129-residue chain is Glycine cleavage system H protein (129 aa).

The 83-residue stretch at 24–106 (TYTVGITEHA…YAGGWIFKIK (83 aa)) folds into the Lipoyl-binding domain. N6-lipoyllysine is present on lysine 65.

It belongs to the GcvH family. The glycine cleavage system is composed of four proteins: P, T, L and H. The cofactor is (R)-lipoate.

Its function is as follows. The glycine cleavage system catalyzes the degradation of glycine. The H protein shuttles the methylamine group of glycine from the P protein to the T protein. In Escherichia fergusonii (strain ATCC 35469 / DSM 13698 / CCUG 18766 / IAM 14443 / JCM 21226 / LMG 7866 / NBRC 102419 / NCTC 12128 / CDC 0568-73), this protein is Glycine cleavage system H protein.